Here is a 173-residue protein sequence, read N- to C-terminus: dCTP deaminase, dUMP-forming (173 aa).

DCTP-binding positions include 93 to 98 (RSSIGR), aspartate 111, 119 to 121 (TLE), glutamine 138, and tyrosine 151. Catalysis depends on glutamate 121, which acts as the Proton donor/acceptor.

This sequence belongs to the dCTP deaminase family. Homotrimer.

It catalyses the reaction dCTP + 2 H2O = dUMP + NH4(+) + diphosphate. Its pathway is pyrimidine metabolism; dUMP biosynthesis; dUMP from dCTP: step 1/1. In terms of biological role, bifunctional enzyme that catalyzes both the deamination of dCTP to dUTP and the hydrolysis of dUTP to dUMP without releasing the toxic dUTP intermediate. The chain is dCTP deaminase, dUMP-forming from Clostridium acetobutylicum (strain ATCC 824 / DSM 792 / JCM 1419 / IAM 19013 / LMG 5710 / NBRC 13948 / NRRL B-527 / VKM B-1787 / 2291 / W).